We begin with the raw amino-acid sequence, 156 residues long: Small ribosomal subunit protein uS7 (156 aa).

It belongs to the universal ribosomal protein uS7 family. As to quaternary structure, part of the 30S ribosomal subunit. Contacts proteins S9 and S11.

In terms of biological role, one of the primary rRNA binding proteins, it binds directly to 16S rRNA where it nucleates assembly of the head domain of the 30S subunit. Is located at the subunit interface close to the decoding center, probably blocks exit of the E-site tRNA. This chain is Small ribosomal subunit protein uS7, found in Geobacillus thermodenitrificans (strain NG80-2).